We begin with the raw amino-acid sequence, 647 residues long: Threonine--tRNA ligase (647 aa).

The region spanning 1–60 is the TGS domain; sequence MQVTIEDQSLEAAAGEACGQVLSRAVSGKRLKNAVACLVDGQPRDLAFPLPEDAHELALV. A catalytic region spans residues 242–533; the sequence is DHRKLGAQLD…LIEHTAGALP (292 aa). Zn(2+) contacts are provided by Cys-334, His-385, and His-510.

This sequence belongs to the class-II aminoacyl-tRNA synthetase family. Homodimer. Zn(2+) is required as a cofactor.

It is found in the cytoplasm. The catalysed reaction is tRNA(Thr) + L-threonine + ATP = L-threonyl-tRNA(Thr) + AMP + diphosphate + H(+). Its function is as follows. Catalyzes the attachment of threonine to tRNA(Thr) in a two-step reaction: L-threonine is first activated by ATP to form Thr-AMP and then transferred to the acceptor end of tRNA(Thr). Also edits incorrectly charged L-seryl-tRNA(Thr). This chain is Threonine--tRNA ligase, found in Solidesulfovibrio magneticus (strain ATCC 700980 / DSM 13731 / RS-1) (Desulfovibrio magneticus).